The primary structure comprises 715 residues: MSQVMSSPLLAGGHAVSLAPCDEPRRTLHPAPSPSLPPQCSYYTTEGWGAQALMAPVPCMGPPGRLQQAPQVEAKATCFLPSPGEKALGTPEDLDSYIDFSLESLNQMILELDPTFQLLPPGTGGSQAELAQSTMSMRKKEESEALDIKYIEVTSARSRCHDGPQHCSSPSVTPPFGSLRSGGLLLSRDVPRETRSSSESLIFSGNQGRGHQRPLPPSEGLSPRPPNSPSISIPCMGSKASSPHGLGSPLVASPRLEKRLGGLAPQRGSRISVLSASPVSDVSYMFGSSQSLLHSSNSSHQSSSRSLESPANSSSSLHSLGSVSLCTRPSDFQAPRNPTLTMGQPRTPHSPPLAKEHASSCPPSITNSMVDIPIVLINGCPEPGSSPPQRTPGHQNSVQPGAASPSNPCPATRSNSQTLSDAPFTTCPEGPARDMQPTMKFVMDTSKYWFKPNITREQAIELLRKEEPGAFVIRDSSSYRGSFGLALKVQEVPASAQSRPGEDSNDLIRHFLIESSAKGVHLKGADEEPYFGSLSAFVCQHSIMALALPCKLTIPQRELGGADGASDSTDSPASCQKKSAGCHTLYLSSVSVETLTGALAVQKAISTTFERDILPTPTVVHFKVTEQGITLTDVQRKVFFRRHYPLTTLRFCGMDPEQRKWQKYCKPSWIFGFVAKSQTEPQENVCHLFAEYDMVQPASQVIGLVTALLQDAERM.

Residues 1-18 (MSQVMSSPLLAGGHAVSL) form the signal peptide. Position 82 is a phosphoserine (S82). Disordered stretches follow at residues 159–183 (RCHD…RSGG), 195–251 (RSSS…SPLV), 291–364 (SLLH…CPPS), and 376–435 (LING…ARDM). Residues 197-206 (SSESLIFSGN) are compositionally biased toward polar residues. S248 bears the Phosphoserine mark. Over residues 291 to 325 (SLLHSSNSSHQSSSRSLESPANSSSSLHSLGSVSL) the composition is skewed to low complexity. The region spanning 449-556 (WFKPNITREQ…ALPCKLTIPQ (108 aa)) is the SH2 domain. One can recognise a PTB domain in the interval 582–705 (CHTLYLSSVS…QPASQVIGLV (124 aa)).

This sequence belongs to the PTEN phosphatase protein family. As to quaternary structure, interacts (via SH2 domain) with Rho GTPase-activating protein DLC1 (via C-terminus); the interaction is independent of DLC1 tyrosine phosphorylation. Interacts with integrin ITGB1; the interaction displaces tensin TNS3 from the ITGB1 cytoplasmic tail and promotes ITGB1 stability. Interacts (via SH2 domain) with E3 ubiquitin-protein ligase CBL (phosphorylated on 'Tyr-774'); the interaction is enhanced in the presence of EGF and reduces interaction of CBL with EGFR. Interacts (via SH2 domain) with receptor tyrosine kinase MET (when phosphorylated); the interaction increases MET protein stability. Proteolytically cleaved by caspase-3 during apoptosis. In terms of tissue distribution, expressed at low levels in colon (at protein level). Expressed in prostate and placenta.

Its subcellular location is the cell junction. It localises to the focal adhesion. The protein resides in the cytoplasm. It is found in the cytoskeleton. Its function is as follows. Promotes EGF-induced cell migration by displacing tensin TNS3 from the cytoplasmic tail of integrin ITGB1 which results in dissociation of TNS3 from focal adhesions, disassembly of actin stress fibers and initiation of cell migration. Suppresses ligand-induced degradation of EGFR by reducing EGFR ubiquitination in the presence of EGF. Increases MET protein stability by inhibiting MET endocytosis and subsequent lysosomal degradation which leads to increased cell survival, proliferation and migration. In Homo sapiens (Human), this protein is Tensin-4 (TNS4).